The sequence spans 431 residues: MAQFYSAKRRVTTRQIITVKVNDLDSFGQGVARHNGKALFIPGLLPEESAEVIITEDKKQFARARVSRRLNDSPERETPRCPHFGVCGGCQQQHVGIDLQQRSKSAALARLMKHEVNDIIAGASWGYRRRARLSLNCPPDKPLQMGFRKAGSSDIVNVEQCPVLAPQLEALLPRIRACLASLHGTRHLGHVELVQAGSGTLMILRHTAPLSAADKEKLERFSHSEGLSLFLAPFSEILETVSGEAPWYDSHGLRLTFSPRDFIQVNEAVNQQMVARALEWLDVRAEDRVLDLFCGMGNFTLPLATRAASVVGVEGVQALVEKGRENAIRNGLHNVTFFHENLEEDVTKQPWAKNGFDKVLLDPARAGATGVMRHIIKLKPIRIVYVSCNPATLARDSEALVNAGYEVTRLAMLDMFPHTGHLESMVLFERM.

The region spanning 10–68 (RVTTRQIITVKVNDLDSFGQGVARHNGKALFIPGLLPEESAEVIITEDKKQFARARVSR) is the TRAM domain. [4Fe-4S] cluster contacts are provided by C81, C87, C90, and C161. Q264, F293, N298, E314, N341, and D362 together coordinate S-adenosyl-L-methionine. C388 serves as the catalytic Nucleophile.

This sequence belongs to the class I-like SAM-binding methyltransferase superfamily. RNA M5U methyltransferase family. RlmD subfamily.

The enzyme catalyses uridine(1939) in 23S rRNA + S-adenosyl-L-methionine = 5-methyluridine(1939) in 23S rRNA + S-adenosyl-L-homocysteine + H(+). Functionally, catalyzes the formation of 5-methyl-uridine at position 1939 (m5U1939) in 23S rRNA. The sequence is that of 23S rRNA (uracil(1939)-C(5))-methyltransferase RlmD from Salmonella typhi.